The chain runs to 701 residues: MARKTPISLYRNIGISAHIDAGKTTTTERILFYTGLTHKLGEVHDGAATTDYMEQEQERGITITSAAVTSYWSGMAKQFPEHRFNIIDTPGHVDFTVEVERSMRVLDGAVMVYCAVGGVQPQSETVWRQANKYQVPRLAFVNKMDRQGANFFRVVEQMKTRLRANPVPIVIPVGAEDSFTGVVDLLKMKSIIWNEADKGTTFTYGDIPAELVETAEEWRQNMIEAAAEASEELMDKYLGGEDLAEEEIVGALRQRTLAGEIQPMLCGSAFKNKGVQRMLDAVVELLPAPTDIPPVQGVNPNTEEADSRQASDEEKFSALAFKMLNDKYVGQLTFIRVYSGVVKSGDTVLNSVKGTRERIGRLVQMTAADRTEIEEVRAGDIAAAIGLKDVTTGETLCAESAPIILERMEFPEPVIHIAVEPKTKADQEKMGIALNRLAKEDPSFRVRTDEESGQTIISGMGELHLEIIVDRMKREFGVEANIGAPQVAYRETIRKAVKAEYKHAKQSGGKGQYGHVVIEMEPMEPGGEGYEFIDEIKGGVIPREFIPSVDKGIRDTLPNGIVAGYPVVDVRIRLVFGSYHDVDSSQLAFELAASQAFKEGMRQASPALLEPIMAVEVETPEEYMGDVMGDLNRRRGVVLGMDDDGIGGKKVRAEVPLAEMFGYSTDLRSATQGRATYSMEFKKYSEAPAHIAAAVTEARKG.

In terms of domain architecture, tr-type G spans 8 to 290; the sequence is SLYRNIGISA…AVVELLPAPT (283 aa). GTP is bound by residues 17 to 24, 88 to 92, and 142 to 145; these read AHIDAGKT, DTPGH, and NKMD.

This sequence belongs to the TRAFAC class translation factor GTPase superfamily. Classic translation factor GTPase family. EF-G/EF-2 subfamily.

It localises to the cytoplasm. Its function is as follows. Catalyzes the GTP-dependent ribosomal translocation step during translation elongation. During this step, the ribosome changes from the pre-translocational (PRE) to the post-translocational (POST) state as the newly formed A-site-bound peptidyl-tRNA and P-site-bound deacylated tRNA move to the P and E sites, respectively. Catalyzes the coordinated movement of the two tRNA molecules, the mRNA and conformational changes in the ribosome. The sequence is that of Elongation factor G from Neisseria gonorrhoeae (strain ATCC 700825 / FA 1090).